The sequence spans 113 residues: Iron-sulfur cluster insertion protein ErpA (113 aa).

Residues C41, C105, and C107 each contribute to the iron-sulfur cluster site.

Belongs to the HesB/IscA family. Homodimer. Iron-sulfur cluster is required as a cofactor.

Required for insertion of 4Fe-4S clusters for at least IspG. The chain is Iron-sulfur cluster insertion protein ErpA from Vibrio vulnificus (strain YJ016).